We begin with the raw amino-acid sequence, 383 residues long: Acetylornithine deacetylase (383 aa).

His-80 lines the Zn(2+) pocket. The active site involves Asp-82. Asp-112 provides a ligand contact to Zn(2+). Glu-144 is a catalytic residue. Positions 145, 169, and 355 each coordinate Zn(2+).

It belongs to the peptidase M20A family. ArgE subfamily. Homodimer. Zn(2+) is required as a cofactor. It depends on Co(2+) as a cofactor. The cofactor is glutathione.

The protein localises to the cytoplasm. The enzyme catalyses N(2)-acetyl-L-ornithine + H2O = L-ornithine + acetate. It functions in the pathway amino-acid biosynthesis; L-arginine biosynthesis; L-ornithine from N(2)-acetyl-L-ornithine (linear): step 1/1. Functionally, catalyzes the hydrolysis of the amide bond of N(2)-acetylated L-amino acids. Cleaves the acetyl group from N-acetyl-L-ornithine to form L-ornithine, an intermediate in L-arginine biosynthesis pathway, and a branchpoint in the synthesis of polyamines. The protein is Acetylornithine deacetylase of Salmonella arizonae (strain ATCC BAA-731 / CDC346-86 / RSK2980).